A 150-amino-acid polypeptide reads, in one-letter code: uncharacterized protein (150 aa).

It to A.tumefaciens conjugal transfer protein TraB.

This is an uncharacterized protein from Agrobacterium tumefaciens (strain 15955).